A 669-amino-acid polypeptide reads, in one-letter code: DNA mismatch repair protein MutL (669 aa).

Positions 361 to 409 (ENVFSQPYQAPVTSSTQKKSTGAYQGSAGKGLTDTQKSPQKTLDTRQFG) are disordered. Composition is skewed to polar residues over residues 363 to 384 (VFSQPYQAPVTSSTQKKSTGAY) and 393 to 402 (TDTQKSPQKT).

The protein belongs to the DNA mismatch repair MutL/HexB family.

This protein is involved in the repair of mismatches in DNA. It is required for dam-dependent methyl-directed DNA mismatch repair. May act as a 'molecular matchmaker', a protein that promotes the formation of a stable complex between two or more DNA-binding proteins in an ATP-dependent manner without itself being part of a final effector complex. The protein is DNA mismatch repair protein MutL of Proteus mirabilis (strain HI4320).